The chain runs to 279 residues: uncharacterized protein (279 aa).

Residues 60-92 (RKANKLNNKQDSTFFNSASGETNNTILPPGVKN) form a disordered region. Residues 70–85 (DSTFFNSASGETNNTI) show a composition bias toward polar residues. Helical transmembrane passes span 156–176 (IVGYTNLVIVAFFAGLLAVMN), 202–222 (ISIFVISIVTLPFWTMFILFL), and 237–257 (FIWIVLIINVVLLLVSCLLMI).

The protein resides in the cell membrane. This is an uncharacterized protein from Mycoplasma genitalium (strain ATCC 33530 / DSM 19775 / NCTC 10195 / G37) (Mycoplasmoides genitalium).